A 1147-amino-acid polypeptide reads, in one-letter code: Probable phospholipid-transporting ATPase IIB (1147 aa).

Over 1 to 146 (MADQIPLYPV…NQKYNVFTFI (146 aa)) the chain is Cytoplasmic. Residues 147 to 168 (PGVLYEQFKFFLNLYFLVISCS) form a helical membrane-spanning segment. The Extracellular segment spans residues 169-173 (QFVPA). A helical membrane pass occupies residues 174–196 (LKIGYLYTYWAPLGFVLAVTMTR). The Cytoplasmic segment spans residues 197 to 380 (EAIDEFRRFQ…GLLDLELNRL (184 aa)). Residues 381 to 401 (TKALFLALVALSIVMVTLQGF) form a helical membrane-spanning segment. Topologically, residues 402–409 (VGPWYRNL) are extracellular. The helical transmembrane segment at 410–431 (FRFLLLFSYIIPISLRVNLDMG) threads the bilayer. Residues 432–930 (KAVYGWMMMK…GRNSYKRSAA (499 aa)) are Cytoplasmic-facing. The 4-aspartylphosphate intermediate role is filled by D468. Positions 468, 469, and 470 each coordinate ATP. D468 provides a ligand contact to Mg(2+). A Mg(2+)-binding site is contributed by T470. The interval 503–535 (RDSYSQMQSQAGGNNTGSTPLRKAQSSAPKVRK) is disordered. Residues 505–530 (SYSQMQSQAGGNNTGSTPLRKAQSSA) show a composition bias toward polar residues. ATP is bound by residues E591, F633, K638, K657, R686, T687, T766, G767, D768, R848, and K854. D874 provides a ligand contact to Mg(2+). ATP-binding residues include N877 and D878. A Mg(2+)-binding site is contributed by D878. A helical membrane pass occupies residues 931-951 (LGQFVMHRGLIISTMQAVFSS). At 952 to 963 (VFYFASVPLYQG) the chain is on the extracellular side. A helical membrane pass occupies residues 964-982 (FLMVGYATIYTMFPVFSLV). The Cytoplasmic segment spans residues 983-1012 (LDQDVKPEMAMLYPELYKDLTKGRSLSFKT). Residues 1013–1031 (FLIWVLISIYQGGILMYGA) traverse the membrane as a helical segment. Residues 1032–1038 (LVLFESE) are Extracellular-facing. Residues 1039 to 1061 (FVHVVAISFTALILTELLMVALT) form a helical membrane-spanning segment. Residues 1062–1067 (VRTWHW) are Cytoplasmic-facing. A helical transmembrane segment spans residues 1068–1088 (LMVVAEFLSLGCYVSSLAFLN). At 1089–1105 (EYFGIGRVSFGAFLDVA) the chain is on the extracellular side. Residues 1106-1130 (FITTVTFLWKVSAITVVSCLPLYVL) form a helical membrane-spanning segment. The Cytoplasmic segment spans residues 1131 to 1147 (KYLRRKLSPPSYCKLAS).

Belongs to the cation transport ATPase (P-type) (TC 3.A.3) family. Type IV subfamily. Requires Mg(2+) as cofactor.

It is found in the golgi apparatus. The protein localises to the trans-Golgi network membrane. The catalysed reaction is ATP + H2O + phospholipidSide 1 = ADP + phosphate + phospholipidSide 2.. The polypeptide is Probable phospholipid-transporting ATPase IIB (ATP9B) (Homo sapiens (Human)).